We begin with the raw amino-acid sequence, 423 residues long: Glutamine synthetase, chloroplastic (423 aa).

The N-terminal 51 residues, 1-51 (MAQAVVPAMQCRVGVKAAAGRVWSAGRTRTGRGGASPGFKVMAVSTGSTGV), are a transit peptide targeting the chloroplast. The GS beta-grasp domain maps to 70–150 (VIAEYIWVGG…VICDTYTPQG (81 aa)). Residues 89–115 (RTISKPVEDPSELPKWNYDGSSTGQAP) are disordered. In terms of domain architecture, GS catalytic spans 154 to 423 (PTNKRHRAAQ…LAAKKLALKV (270 aa)).

It belongs to the glutamine synthetase family. As to quaternary structure, homooctamer.

It localises to the plastid. It is found in the chloroplast. It carries out the reaction L-glutamate + NH4(+) + ATP = L-glutamine + ADP + phosphate + H(+). Its function is as follows. The light-modulated chloroplast enzyme, encoded by a nuclear gene and expressed primarily in leaves, is responsible for the reassimilation of the ammonia generated by photorespiration. The protein is Glutamine synthetase, chloroplastic (GLN2) of Zea mays (Maize).